The following is a 454-amino-acid chain: 5-hydroxytryptamine receptor 3D (454 aa).

The signal sequence occupies residues 1-24; sequence MQKHSPGPPALALLSQSLLTTGNG. Topologically, residues 25–232 are extracellular; it reads DTLIINCPGF…IRRRCRPSPY (208 aa). An N-linked (GlcNAc...) asparagine glycan is attached at N66. Residues 233-253 traverse the membrane as a helical segment; the sequence is VVNFLVPSGILIAIDALSFYL. Residues 254–264 lie on the Cytoplasmic side of the membrane; it reads PLESGNCAPFK. A helical membrane pass occupies residues 265–285; the sequence is MTVLLGYSVFLLMMNDLLPAT. At 286–306 the chain is on the extracellular side; that stretch reads STSSHASLVAPLALMQTPLPA. Residues 307-327 form a helical membrane-spanning segment; the sequence is GVYFALCLSLMVGSLLETIFI. Topologically, residues 328–431 are cytoplasmic; that stretch reads THLLHVATTQ…WVQFSHAMDA (104 aa). The disordered stretch occupies residues 363 to 410; the sequence is PQKGNKGPGLTPTHLPGVKEPEVSAGQMPGPGEAELTGGSEWTRAQRE. The segment at 399-430 is HA-stretch; determines single-channel conductance in 5-HT3 receptors; that stretch reads TGGSEWTRAQREHEAQKQHSVELWVQFSHAMD. A helical transmembrane segment spans residues 432 to 452; that stretch reads LLFRLYLLFMASSIITVICLW. Residues 453–454 are Extracellular-facing; it reads NT.

It belongs to the ligand-gated ion channel (TC 1.A.9) family. 5-hydroxytryptamine receptor (TC 1.A.9.2) subfamily. HTR3D sub-subfamily. As to quaternary structure, forms homopentameric as well as heteropentameric serotonin-activated cation-selective channel complexes with HTR3A. The homomeric complex is not functional. Heteropentameric complexes display properties which resemble that of neuronal serotonin-activated channels in vivo. In terms of tissue distribution, expressed in liver, as well as fetal and adult colon and kidney.

The protein resides in the postsynaptic cell membrane. The protein localises to the cell membrane. The catalysed reaction is Na(+)(in) = Na(+)(out). It catalyses the reaction K(+)(in) = K(+)(out). It carries out the reaction Ca(2+)(in) = Ca(2+)(out). Functionally, forms serotonin (5-hydroxytryptamine/5-HT3)-activated cation-selective channel complexes, which when activated cause fast, depolarizing responses in neurons. The chain is 5-hydroxytryptamine receptor 3D from Homo sapiens (Human).